The sequence spans 341 residues: 2-keto-4-carboxy-3-hexenedioate hydratase (341 aa).

2 residues coordinate Zn(2+): His8 and His10. Position 71-73 (Arg71–Ser73) interacts with substrate. Residue His178 participates in Zn(2+) binding. Substrate contacts are provided by Tyr194 and His223. The active-site Proton donor/acceptor is the Glu284. Residue Arg290 participates in substrate binding.

This sequence belongs to the metallo-dependent hydrolases superfamily. As to quaternary structure, homodimer. It depends on Zn(2+) as a cofactor.

The catalysed reaction is (3Z)-2-oxo-4-carboxy-3-hexenedioate + H2O = (2S)-2-hydroxy-4-oxobutane-1,2,4-tricarboxylate. It functions in the pathway secondary metabolite metabolism; lignin degradation. In terms of biological role, contributes to the degradation of lignin at the level of the protocatechuate 4,5-cleavage pathway. Catalyzes the hydration of the double bond of (3Z)-2-keto-4-carboxy-3-hexenedioate (KCH) to (4S)-4-carboxy-4-hydroxy-2-oxoadipate (CHA, also named (2S)-2-hydroxy-4-oxobutane-1,2,4-tricarboxylate). Is involved in the catabolism of both vanillate and syringate. This chain is 2-keto-4-carboxy-3-hexenedioate hydratase, found in Sphingobium sp. (strain NBRC 103272 / SYK-6).